A 2191-amino-acid polypeptide reads, in one-letter code: Genome polyprotein (2191 aa).

Gly2 is lipidated: N-myristoyl glycine; by host. Residues 2-1501 (GAQVSTQKTG…HVSRAFICLQ (1500 aa)) are Cytoplasmic-facing. The interval 566–582 (FYQNDVQNAVERSIVRV) is amphipathic alpha-helix. Active-site for protease 2A activity residues include His878 and Asp896. The Zn(2+) site is built by Cys913 and Cys915. The For protease 2A activity role is filled by Cys967. Zn(2+) contacts are provided by Cys973 and His975. Positions 1107–1179 (NNGWLKKFTE…EQSAPSQSDQ (73 aa)) are membrane-binding. Residues 1107–1245 (NNGWLKKFTE…SPGVGKSVAT (139 aa)) are oligomerization. The segment at 1128–1132 (AIKIQ) is RNA-binding. Residues 1211-1367 (EKKMSNYIQF…SMYNQNGKIN (157 aa)) enclose the SF3 helicase domain. Zn(2+) contacts are provided by Cys1375, Cys1387, and Cys1392. The segment at 1375–1392 (CDEECCPVNFKKCCPLVC) adopts a C4-type; degenerate zinc-finger fold. The segment at 1419-1426 (EYNHRHSV) is RNA-binding. The oligomerization stretch occupies residues 1430–1435 (LEALFQ). The stretch at 1502-1517 (ALTTFVSVAGIIYIIY) is an intramembrane region. Topologically, residues 1518–2191 (KLFAGFQGAY…TLRRKWLDSF (674 aa)) are cytoplasmic. Tyr1527 is modified (O-(5'-phospho-RNA)-tyrosine). Residues 1547–1725 (GPAFEFAVAM…FSAALLKHYF (179 aa)) enclose the Peptidase C3 domain. Residues His1586, Glu1617, and Cys1693 each act as for protease 3C activity in the active site. The 117-residue stretch at 1956-2072 (GHLIAFDYSG…SYPWPIDASL (117 aa)) folds into the RdRp catalytic domain. Residues Asp1962 and Asp2058 each coordinate Mg(2+).

It belongs to the picornaviruses polyprotein family. As to quaternary structure, interacts with capsid protein VP1 and capsid protein VP3 to form heterotrimeric protomers. In terms of assembly, interacts with capsid protein VP0, and capsid protein VP3 to form heterotrimeric protomers. Five protomers subsequently associate to form pentamers which serve as building blocks for the capsid. Interacts with capsid protein VP2, capsid protein VP3 and capsid protein VP4 following cleavage of capsid protein VP0. Interacts with host CD55 and FCGRT; these interactions promote virus attachment to the host cell and subsequent internalization. Interacts with capsid protein VP1 and capsid protein VP3 in the mature capsid. Interacts with host CD55 and FCGRT; these interactions promote virus attachment to the host cell and subsequent internalization. As to quaternary structure, interacts with capsid protein VP0 and capsid protein VP1 to form heterotrimeric protomers. Five protomers subsequently associate to form pentamers which serve as building blocks for the capsid. Interacts with capsid protein VP4 in the mature capsid. Interacts with protein 2C; this interaction may be important for virion morphogenesis. Interacts with host FCGRT; this interaction promotes virus attachment to the host cell and subsequent internalization. In terms of assembly, interacts with capsid protein VP1 and capsid protein VP3. Homodimer. As to quaternary structure, homohexamer; forms a hexameric ring structure with 6-fold symmetry characteristic of AAA+ ATPases. Interacts (via N-terminus) with host RTN3 (via reticulon domain); this interaction is important for viral replication. Interacts with capsid protein VP3; this interaction may be important for virion morphogenesis. In terms of assembly, interacts with protein 3CD. Homodimer. Interacts with host GBF1. Interacts (via GOLD domain) with host ACBD3 (via GOLD domain); this interaction allows the formation of a viral protein 3A/ACBD3 heterotetramer with a 2:2 stoichiometry, which will stimulate the recruitment of host PI4KB in order to synthesize PI4P at the viral RNA replication sites. As to quaternary structure, interacts with RNA-directed RNA polymerase. In terms of assembly, interacts with protein 3AB and with RNA-directed RNA polymerase. Interacts with Viral protein genome-linked and with protein 3CD. Requires Mg(2+) as cofactor. Specific enzymatic cleavages in vivo by the viral proteases yield processing intermediates and the mature proteins. Post-translationally, myristoylation is required for the formation of pentamers during virus assembly. Further assembly of 12 pentamers and a molecule of genomic RNA generates the provirion. In terms of processing, during virion maturation, immature virions are rendered infectious following cleavage of VP0 into VP4 and VP2. This maturation seems to be an autocatalytic event triggered by the presence of RNA in the capsid and it is followed by a conformational change infectious virion. Myristoylation is required during RNA encapsidation and formation of the mature virus particle. Post-translationally, VPg is uridylylated by the polymerase into VPg-pUpU. This acts as a nucleotide-peptide primer for the genomic RNA replication.

Its subcellular location is the virion. The protein resides in the host cytoplasm. The protein localises to the host cytoplasmic vesicle membrane. It is found in the host nucleus. It carries out the reaction a ribonucleoside 5'-triphosphate + H2O = a ribonucleoside 5'-diphosphate + phosphate + H(+). The enzyme catalyses Selective cleavage of Tyr-|-Gly bond in the picornavirus polyprotein.. It catalyses the reaction RNA(n) + a ribonucleoside 5'-triphosphate = RNA(n+1) + diphosphate. The catalysed reaction is Selective cleavage of Gln-|-Gly bond in the poliovirus polyprotein. In other picornavirus reactions Glu may be substituted for Gln, and Ser or Thr for Gly.. Its activity is regulated as follows. Replication or transcription is subject to high level of random mutations by the nucleotide analog ribavirin. Its function is as follows. Forms an icosahedral capsid of pseudo T=3 symmetry with capsid proteins VP2 and VP3. The capsid is 300 Angstroms in diameter, composed of 60 copies of each capsid protein and enclosing the viral positive strand RNA genome. Capsid protein VP1 mainly forms the vertices of the capsid. Capsid protein VP1 interacts with host cell receptor to provide virion attachment to target host cells. This attachment induces virion internalization. Tyrosine kinases are probably involved in the entry process. After binding to its receptor, the capsid undergoes conformational changes. Capsid protein VP1 N-terminus (that contains an amphipathic alpha-helix) and capsid protein VP4 are externalized. Together, they shape a pore in the host membrane through which viral genome is translocated to host cell cytoplasm. Forms an icosahedral capsid of pseudo T=3 symmetry with capsid proteins VP2 and VP3. The capsid is 300 Angstroms in diameter, composed of 60 copies of each capsid protein and enclosing the viral positive strand RNA genome. In terms of biological role, lies on the inner surface of the capsid shell. After binding to the host receptor, the capsid undergoes conformational changes. Capsid protein VP4 is released, Capsid protein VP1 N-terminus is externalized, and together, they shape a pore in the host membrane through which the viral genome is translocated into the host cell cytoplasm. Functionally, component of immature procapsids, which is cleaved into capsid proteins VP4 and VP2 after maturation. Allows the capsid to remain inactive before the maturation step. Its function is as follows. Cysteine protease that cleaves viral polyprotein and specific host proteins. It is responsible for the autocatalytic cleavage between the P1 and P2 regions, which is the first cleavage occurring in the polyprotein. Also cleaves the host translation initiation factor EIF4G1, in order to shut down the capped cellular mRNA translation. Inhibits the host nucleus-cytoplasm protein and RNA trafficking by cleaving host members of the nuclear pores. Counteracts stress granule formation probably by antagonizing its assembly or promoting its dissassembly. Plays an essential role in the virus replication cycle by acting as a viroporin. Creates a pore in the host endoplasmic reticulum and as a consequence releases Ca2+ in the cytoplasm of infected cell. In turn, high levels of cytoplasmic calcium may trigger membrane trafficking and transport of viral ER-associated proteins to viroplasms, sites of viral genome replication. In terms of biological role, induces and associates with structural rearrangements of intracellular membranes. Displays RNA-binding, nucleotide binding and NTPase activities. May play a role in virion morphogenesis and viral RNA encapsidation by interacting with the capsid protein VP3. Functionally, localizes the viral replication complex to the surface of membranous vesicles. Together with protein 3CD binds the Cis-Active RNA Element (CRE) which is involved in RNA synthesis initiation. Acts as a cofactor to stimulate the activity of 3D polymerase, maybe through a nucleid acid chaperone activity. Its function is as follows. Localizes the viral replication complex to the surface of membranous vesicles. It inhibits host cell endoplasmic reticulum-to-Golgi apparatus transport and causes the disassembly of the Golgi complex, possibly through GBF1 interaction. This would result in depletion of MHC, trail receptors and IFN receptors at the host cell surface. Plays an essential role in viral RNA replication by recruiting ACBD3 and PI4KB at the viral replication sites, thereby allowing the formation of the rearranged membranous structures where viral replication takes place. Acts as a primer for viral RNA replication and remains covalently bound to viral genomic RNA. VPg is uridylylated prior to priming replication into VPg-pUpU. The oriI viral genomic sequence may act as a template for this. The VPg-pUpU is then used as primer on the genomic RNA poly(A) by the RNA-dependent RNA polymerase to replicate the viral genome. During genome replication, the VPg-RNA linkage is removed by the host TDP2, thereby accelerating replication. During the late stage of the replication cycle, host TDP2 is excluded from sites of viral RNA synthesis and encapsidation, allowing for the generation of progeny virions. In terms of biological role, involved in the viral replication complex and viral polypeptide maturation. It exhibits protease activity with a specificity and catalytic efficiency that is different from protease 3C. Protein 3CD binds to the 5'UTR of the viral genome. Functionally, replicates the viral genomic RNA on the surface of intracellular membranes. May form linear arrays of subunits that propagate along a strong head-to-tail interaction called interface-I. Covalently attaches UMP to a tyrosine of VPg, which is used to prime RNA synthesis. The positive stranded RNA genome is first replicated at virus induced membranous vesicles, creating a dsRNA genomic replication form. This dsRNA is then used as template to synthesize positive stranded RNA genomes. ss(+)RNA genomes are either translated, replicated or encapsidated. Its function is as follows. Major viral protease that mediates proteolytic processing of the polyprotein. Cleaves host EIF5B, contributing to host translation shutoff. Also cleaves host PABPC1, contributing to host translation shutoff. Cleaves host NLRP1, triggers host N-glycine-mediated degradation of the autoinhibitory NLRP1 N-terminal fragment. The polypeptide is Genome polyprotein (Echovirus 6 (strain Charles)).